The sequence spans 448 residues: Cytoplasmic tRNA 2-thiolation protein 2 (448 aa).

Belongs to the CTU2/NCS2 family.

Its subcellular location is the cytoplasm. Its pathway is tRNA modification; 5-methoxycarbonylmethyl-2-thiouridine-tRNA biosynthesis. In terms of biological role, plays a central role in 2-thiolation of mcm(5)S(2)U at tRNA wobble positions of tRNA(Lys), tRNA(Glu) and tRNA(Gln). May act by forming a heterodimer with NCS6 that ligates sulfur from thiocarboxylated URM1 onto the uridine of tRNAs at wobble position. Prior mcm(5) tRNA modification by the elongator complex is required for 2-thiolation. May also be involved in protein urmylation. The protein is Cytoplasmic tRNA 2-thiolation protein 2 of Lodderomyces elongisporus (strain ATCC 11503 / CBS 2605 / JCM 1781 / NBRC 1676 / NRRL YB-4239) (Yeast).